The sequence spans 269 residues: MGTEKESPEPDCQKQFQAAVSVIQNLPKNGSYRPSYEEMLRFYSYYKQATMGPCLVPRPGFWDPIGRYKWDAWNSLGKMSREEAMSAYITEMKLVAQKVIDTVPLGEVAEDMFAYFEPLYQVIPDMPRPPETFLRRVTGWKEQVVNGDVGAVSEPPCLPKEPAPPSPESHSPRDLDSEVFCDSLEQLEPELVWTEQRAASGEKRDPRNSPVPPTEKEAAAQAQCSAMAPWAPRARAALLPPVALRRPVALPNVSDPKEVTVSGGVSAAN.

The ACB domain occupies 12–101 (CQKQFQAAVS…MKLVAQKVID (90 aa)). Residues 23 to 32 (IQNLPKNGSY), 43 to 47 (YSYYK), Lys-69, and Tyr-88 each bind an acyl-CoA. 3 disordered regions span residues 150 to 175 (GAVS…PRDL), 195 to 226 (EQRA…QCSA), and 248 to 269 (VALP…SAAN). A compositionally biased stretch (pro residues) spans 156 to 167 (PCLPKEPAPPSP). Phosphoserine is present on residues Ser-166 and Ser-171.

Functionally, binds medium- and long-chain acyl-CoA esters and may function as an intracellular carrier of acyl-CoA esters. The chain is Acyl-CoA-binding domain-containing protein 4 (ACBD4) from Pongo abelii (Sumatran orangutan).